A 621-amino-acid polypeptide reads, in one-letter code: pH-response transcription factor pacc-1 (621 aa).

Positions 1–14 are enriched in polar residues; that stretch reads MSSTPAQENGTVNG. The disordered stretch occupies residues 1–87; the sequence is MSSTPAQENG…PTTASNSSAP (87 aa). Residues 15–87 are compositionally biased toward low complexity; it reads ANAAPAPAPA…PTTASNSSAP (73 aa). 3 consecutive C2H2-type zinc fingers follow at residues 95 to 120, 131 to 155, and 161 to 183; these read LVCRWAECNERFTSAEVLYEHICEKH, LTCQWNSCRTTTVKRDHITSHVRVH, and HKCDFCGKCFKRPQDLKKHVKTH. 2 disordered regions span residues 395 to 539 and 566 to 621; these read PTYA…PETY and DEDD…PRIN. 2 stretches are compositionally biased toward low complexity: residues 409-423 and 436-465; these read ASLASPLSATSPHSA and SYTSGHSPSTSSTSLSPTSRHSSTPSVSYP. The short motif at 464–467 is the YPX[LI] motif 1 element; sequence YPTL. The segment covering 476-486 has biased composition (polar residues); the sequence is PSTSGLGSNFT. Over residues 502–511 the composition is skewed to basic and acidic residues; sequence RAADEADRAP. Polar residues predominate over residues 515–525; the sequence is ASEQATVSSPS. Low complexity predominate over residues 583-595; sequence RNQQQRNQQQQQQ. The YPX[LI] motif 2 motif lies at 614–617; that stretch reads YPVL.

The protein belongs to the pacC/RIM101 family. Binds to DNA. Interacts with palA/prr-1, which binds to the two YPX[LI] motifs and is required for proteolytic processing. Post-translationally, activated by C-terminal proteolytic cleavage by signaling protease (probably palB/RIM13) at neutral to alkaline ambient pH.

The protein localises to the cytoplasm. It localises to the nucleus. Its function is as follows. Transcription factor that mediates regulation of both acid- and alkaline-expressed genes in response to ambient pH. At alkaline ambient pH, activates transcription of alkaline-expressed genes (including pacc-1 itself) and represses transcription of acid-expressed genes. The protein is pH-response transcription factor pacc-1 (pacc-1) of Neurospora crassa (strain ATCC 24698 / 74-OR23-1A / CBS 708.71 / DSM 1257 / FGSC 987).